Reading from the N-terminus, the 735-residue chain is Funoran endo-beta-hydrolase (735 aa).

The signal sequence occupies residues 1 to 27 (MRVKSVYKKLSVSFILVMLSASQEVNS). Glu-200 serves as the catalytic Proton donor. Glu-322 (nucleophile) is an active-site residue.

Belongs to the glycosyl hydrolase 86 family.

It catalyses the reaction Endohydrolysis of beta-(1-&gt;4)-linkages between beta-D-galactopyranose-6-sulfate and 3,6-anhydro-alpha-L-galactopyranose units in funoran.. It carries out the reaction Hydrolysis of (1-&gt;4)-beta-D-galactosidic linkages in agarose, giving the tetramer as the predominant product.. Agarase activity is enhanced in the presence of NaCl. Agarase activity is significantly inhibited by Zn(2+) and slightly activated by several divalent ions including Mg(2+), Cd(2+) and Ca(2+). Its function is as follows. Endohydrolase that cleaves the beta-1,4 glycosidic bond between beta-D-galactopyranose-6-sulfate (G6S) and 3,6-anhydro-alpha-L-galactopyranose (LA) unit of funoran, a polysaccharide produced by red algae of the genus Gloiopeltis. It releases the disaccharide LA-G6S as the predominant end product. Also acts as a random endo-acting beta-agarase, which can hydrolyze agarose tetrasaccharides and hexasaccharides, and produces disaccharides as smallest products. Besides typical agarose oligosaccharides, it can use methylated galactoses. The enzyme exhibits higher catalytic efficiency towards agarose, but binds funoran preferentially. Has no activity on porphyran. The sequence is that of Funoran endo-beta-hydrolase from Wenyingzhuangia aestuarii.